We begin with the raw amino-acid sequence, 364 residues long: Fructose-1,6-bisphosphatase class 1 3 (364 aa).

Mg(2+) is bound by residues Glu101, Asp123, Leu125, and Asp126. Residues 126–129 and Asn218 contribute to the substrate site; that span reads DGSS. A Mg(2+)-binding site is contributed by Glu290.

This sequence belongs to the FBPase class 1 family. As to quaternary structure, homotetramer. Mg(2+) serves as cofactor.

It is found in the cytoplasm. The enzyme catalyses beta-D-fructose 1,6-bisphosphate + H2O = beta-D-fructose 6-phosphate + phosphate. The protein operates within carbohydrate biosynthesis; gluconeogenesis. This chain is Fructose-1,6-bisphosphatase class 1 3, found in Cupriavidus necator (strain ATCC 17699 / DSM 428 / KCTC 22496 / NCIMB 10442 / H16 / Stanier 337) (Ralstonia eutropha).